The sequence spans 243 residues: uncharacterized protein (243 aa).

This is an uncharacterized protein from Ureaplasma parvum serovar 3 (strain ATCC 700970).